Consider the following 543-residue polypeptide: Oxalate--CoA ligase (543 aa).

Position 196–207 (196–207 (HTSGTTSTPKTV)) interacts with ATP. An FACS motif is present at residues 410 to 458 (ENYFRTGDQGYFDPEGFLVLTGRIKELINRGGEKISPIELDGIMLSHPK). Positions 541 to 543 (SKL) match the C-terminal peroxisome targeting signal (PTS1) motif.

The protein belongs to the ATP-dependent AMP-binding enzyme family. Interacts with PEX5.

It localises to the peroxisome matrix. The protein localises to the peroxisome membrane. It catalyses the reaction oxalate + ATP + CoA = oxalyl-CoA + AMP + diphosphate. In terms of biological role, catalyzes the first step in a degradation pathway of oxalate to CO(2) to protect the cell against the harmful effects of oxalate derived from endogenous processes or an environmental sources. In Saccharomyces cerevisiae (strain ATCC 204508 / S288c) (Baker's yeast), this protein is Oxalate--CoA ligase.